The chain runs to 236 residues: Small ribosomal subunit protein uS2c (236 aa).

It belongs to the universal ribosomal protein uS2 family.

It localises to the plastid. The protein resides in the chloroplast. This Chloranthus spicatus (Chulantree) protein is Small ribosomal subunit protein uS2c (rps2).